We begin with the raw amino-acid sequence, 874 residues long: MSRFFVSGYTSDSSSEEEDLLSTSEEELLSSSDEGEDNESDSSFFGEDDDESEESSSDDEDGRPSGPAYFLKKSFLKGAGGDDSDSDSDDEGRKVVKSAKDKLLDDMKSSIEIINSNKYNNNWSIVLGEFDKFGRFLIRCNQTNLGTPKFYIKLLTSLDNSITETSNNERDDKTLKADEARAFNTLRQRIKKQIREFQVYYDLYKENPEEFDENEDEPLESVQAGLNDNVKNEADNSNVGALASNRVLSPIFHTLKTISESRGKKNIDKLEQIATLEKLLEANVSKSSPFELISIYQMLLSVRFDASSNQAFMPLEQWQKNEQDLGKLLDLLEANVDTYQVSELGSTTDDIDIEPVANAQGVKVIFGSITSSIDRLDDELTKSLQHTDPHSTEYVERLKDESTIYNLIVRGQAYVESITPEDVKYKSEQLARIVLRRLEHIYYKPKQLIKANEEEAWRNIEYNSSIVSKGSSVDEVIDQLTEFLQKQQKNKTYGKHAILFSIYYYAVNSQYEKAKELFLRSQFYSNINSAESSLQVQYNRALVQLGLSAFRAGSIEESHKILNEIVNSQRSKELLGQGFNSKFPNQATVLERQKLLPFHQHINLELLECVFMTCSLLIEIPTLAAIANNHKDSKRKNASLKSFKSKLDFHDRQFFTGPPESIKDHIVHASIALQKGDWLKSYNLLSSIKIWKLFPDNDKLLAMMKNQLQIEGLRTYIFTYKSVFKKLSIEKLQQIFQLSKDEVVSILEKMITTGNVSGGEIIDNKFISFTSTTEPQRSKLQELAIVLNEKIQLLTEKNEKTQSNGYGKKQQNKDQQNQQQQNQNQNQQQQQNQQQQQQQQSSQQQSNNILSEESANKFRYANVNSNNDEFQATA.

The disordered stretch occupies residues 1 to 70 (MSRFFVSGYT…DGRPSGPAYF (70 aa)). Residues 14-61 (SSEEEDLLSTSEEELLSSSDEGEDNESDSSFFGEDDDESEESSSDDED) show a composition bias toward acidic residues. Positions 598–774 (FHQHINLELL…KFISFTSTTE (177 aa)) constitute a PCI domain. Positions 797–874 (KNEKTQSNGY…SNNDEFQATA (78 aa)) are disordered. A compositionally biased stretch (low complexity) spans 813-848 (KDQQNQQQQNQNQNQQQQQNQQQQQQQQSSQQQSNN). Positions 862-874 (NVNSNNDEFQATA) are enriched in polar residues.

The protein belongs to the eIF-3 subunit C family. Component of the eukaryotic translation initiation factor 3 (eIF-3) complex.

The protein resides in the cytoplasm. Functionally, component of the eukaryotic translation initiation factor 3 (eIF-3) complex, which is involved in protein synthesis of a specialized repertoire of mRNAs and, together with other initiation factors, stimulates binding of mRNA and methionyl-tRNAi to the 40S ribosome. The eIF-3 complex specifically targets and initiates translation of a subset of mRNAs involved in cell proliferation. The chain is Eukaryotic translation initiation factor 3 subunit C from Candida albicans (strain SC5314 / ATCC MYA-2876) (Yeast).